The following is a 43-amino-acid chain: Protein PsbN (43 aa).

Residues 4-24 (AIVLSISMAAVVVAITGISIY) traverse the membrane as a helical segment.

The protein belongs to the PsbN family.

The protein resides in the cellular thylakoid membrane. Functionally, may play a role in photosystem I and II biogenesis. This Nostoc punctiforme (strain ATCC 29133 / PCC 73102) protein is Protein PsbN.